We begin with the raw amino-acid sequence, 316 residues long: MPEQEAFRLRCPVCGSTDIVFNEETGEYVCARCGTIVLDRYVDQGPEWRAFTPEERERRGRTGAPLSPTLHDHGLSTVIDHRDRDALGKRLSPRKRQEVQRLRKWQLRARIQTGMDRNLTIAMNELDRMANLLNLPKQIKEEAAVIYRKAVEKGLVRGRSIESVVAAVIYAACRIHHQPRTLDEIAKKLEVNRKEVARCYRLITKELKLKVPIADAMDHIPRIGEALKLRGDIIEYAMKIMEKIKGHPITAGKDPAGIAAAVIYIAVMQKGERRTQKEIANVAGVTEVTVRNRYKEIMKVLNEMDLEEIEKEVSKK.

A TFIIB-type zinc finger spans residues 7–38 (FRLRCPVCGSTDIVFNEETGEYVCARCGTIVL). Zn(2+) contacts are provided by Cys11, Cys14, Cys30, and Cys33. The interval 51–73 (FTPEERERRGRTGAPLSPTLHDH) is disordered. A run of 2 repeats spans residues 124 to 207 (NELD…TKEL) and 218 to 299 (DHIP…EIMK).

It belongs to the TFIIB family.

In terms of biological role, stabilizes TBP binding to an archaeal box-A promoter. Also responsible for recruiting RNA polymerase II to the pre-initiation complex (DNA-TBP-TFIIB). The polypeptide is Transcription initiation factor IIB (Ignicoccus hospitalis (strain KIN4/I / DSM 18386 / JCM 14125)).